We begin with the raw amino-acid sequence, 397 residues long: Succinate--CoA ligase [ADP-forming] subunit beta (397 aa).

Positions 9–254 (KALLKGYGAP…ETEEDAKEIE (246 aa)) constitute an ATP-grasp domain. Residues K46, 53–55 (GRG), E109, A112, and E117 each bind ATP. Mg(2+)-binding residues include N209 and D223. Substrate contacts are provided by residues N274 and 331–333 (GIM).

This sequence belongs to the succinate/malate CoA ligase beta subunit family. In terms of assembly, heterotetramer of two alpha and two beta subunits. Requires Mg(2+) as cofactor.

The catalysed reaction is succinate + ATP + CoA = succinyl-CoA + ADP + phosphate. It carries out the reaction GTP + succinate + CoA = succinyl-CoA + GDP + phosphate. It participates in carbohydrate metabolism; tricarboxylic acid cycle; succinate from succinyl-CoA (ligase route): step 1/1. Succinyl-CoA synthetase functions in the citric acid cycle (TCA), coupling the hydrolysis of succinyl-CoA to the synthesis of either ATP or GTP and thus represents the only step of substrate-level phosphorylation in the TCA. The beta subunit provides nucleotide specificity of the enzyme and binds the substrate succinate, while the binding sites for coenzyme A and phosphate are found in the alpha subunit. This Rhizobium johnstonii (strain DSM 114642 / LMG 32736 / 3841) (Rhizobium leguminosarum bv. viciae) protein is Succinate--CoA ligase [ADP-forming] subunit beta.